Reading from the N-terminus, the 87-residue chain is Small ribosomal subunit protein bS20 (87 aa).

The segment at 1 to 24 (MANTAQARKRARQSVERNKHNSSL) is disordered.

Belongs to the bacterial ribosomal protein bS20 family.

Binds directly to 16S ribosomal RNA. The chain is Small ribosomal subunit protein bS20 from Bordetella avium (strain 197N).